The chain runs to 100 residues: Urease subunit gamma (100 aa).

The protein belongs to the urease gamma subunit family. Heterotrimer of UreA (gamma), UreB (beta) and UreC (alpha) subunits. Three heterotrimers associate to form the active enzyme.

The protein resides in the cytoplasm. The enzyme catalyses urea + 2 H2O + H(+) = hydrogencarbonate + 2 NH4(+). It functions in the pathway nitrogen metabolism; urea degradation; CO(2) and NH(3) from urea (urease route): step 1/1. This is Urease subunit gamma from Polynucleobacter asymbioticus (strain DSM 18221 / CIP 109841 / QLW-P1DMWA-1) (Polynucleobacter necessarius subsp. asymbioticus).